The chain runs to 114 residues: Macrophage migration inhibitory factor homolog (114 aa).

Pro2 functions as the Proton acceptor; via imino nitrogen in the catalytic mechanism. Substrate is bound by residues Lys33 and Asn98.

The protein belongs to the MIF family.

Its subcellular location is the secreted. It catalyses the reaction L-dopachrome = 5,6-dihydroxyindole-2-carboxylate. It carries out the reaction 3-phenylpyruvate = enol-phenylpyruvate. Functionally, tautomerization of the methyl ester of L-dopachrome. Inhibits migration of human peripheral blood mononuclear cells. This chain is Macrophage migration inhibitory factor homolog, found in Trichuris trichiura (Whipworm).